A 64-amino-acid chain; its full sequence is Large ribosomal subunit protein uL29 (64 aa).

It belongs to the universal ribosomal protein uL29 family.

The sequence is that of Large ribosomal subunit protein uL29 from Cupriavidus metallidurans (strain ATCC 43123 / DSM 2839 / NBRC 102507 / CH34) (Ralstonia metallidurans).